Here is a 249-residue protein sequence, read N- to C-terminus: tRNA (guanine-N(1)-)-methyltransferase (249 aa).

S-adenosyl-L-methionine contacts are provided by residues Gly113 and 133–138 (IGDFVV).

It belongs to the RNA methyltransferase TrmD family. In terms of assembly, homodimer.

It localises to the cytoplasm. The enzyme catalyses guanosine(37) in tRNA + S-adenosyl-L-methionine = N(1)-methylguanosine(37) in tRNA + S-adenosyl-L-homocysteine + H(+). In terms of biological role, specifically methylates guanosine-37 in various tRNAs. The sequence is that of tRNA (guanine-N(1)-)-methyltransferase from Neisseria meningitidis serogroup C / serotype 2a (strain ATCC 700532 / DSM 15464 / FAM18).